A 210-amino-acid chain; its full sequence is Large ribosomal subunit protein uL3 (210 aa).

Positions 126 to 167 (WGFQRGPSGHGSKNIREPGSTGNATFPGRVIKGKKMPGQKGN) are disordered. Residues 156–167 (IKGKKMPGQKGN) show a composition bias toward basic residues.

Belongs to the universal ribosomal protein uL3 family. Part of the 50S ribosomal subunit. Forms a cluster with proteins L14 and L19.

Its function is as follows. One of the primary rRNA binding proteins, it binds directly near the 3'-end of the 23S rRNA, where it nucleates assembly of the 50S subunit. This is Large ribosomal subunit protein uL3 from Syntrophobacter fumaroxidans (strain DSM 10017 / MPOB).